A 68-amino-acid polypeptide reads, in one-letter code: Large ribosomal subunit protein bL33c (68 aa).

It belongs to the bacterial ribosomal protein bL33 family.

It localises to the plastid. The protein resides in the chloroplast. The polypeptide is Large ribosomal subunit protein bL33c (Nymphaea alba (White water-lily)).